Consider the following 86-residue polypeptide: Secreted transmembrane peptide 6 (86 aa).

A signal peptide spans 1–31; that stretch reads MGMKSPNIAAFMLPLLLILFTLSSQLKVVES. Positions 45-58 match the SCOOP motif motif; the sequence is IVYTPPSRSCGTSP. A SxS motif essential for MIK2 binding motif is present at residues 51-53; it reads SRS.

It belongs to the serine rich endogenous peptide (SCOOP) phytocytokine family. In terms of assembly, interacts with MIK2 (via extracellular leucine-rich repeat domain); this interaction triggers the formation of complex between MIK2 and the BAK1/SERK3 and SERK4 coreceptors, and subsequent BAK1 activation by phosphorylation. Mostly expressed in leaves, and, to a lower extent, in roots, stems, siliques, seeds and flowers.

Its subcellular location is the cell membrane. It is found in the secreted. It localises to the extracellular space. The protein localises to the apoplast. Brassicaceae-specific phytocytokine (plant endogenous peptide released into the apoplast) perceived by MIK2 in a BAK1/SERK3 and SERK4 coreceptors-dependent manner, that modulates various physiological and antimicrobial processes including growth prevention and reactive oxygen species (ROS) response regulation. Prevents general growth and development. This is Secreted transmembrane peptide 6 from Arabidopsis thaliana (Mouse-ear cress).